The chain runs to 347 residues: Very-long-chain 3-oxoacyl-CoA reductase (347 aa).

The helical transmembrane segment at 20–40 (LLWVVFGLGVLKCTTLSLRFL) threads the bilayer. Positions 120, 147, 223, 227, 256, and 258 each coordinate NADP(+). The active-site Proton donor is Tyr223. Residue Lys227 is the Lowers pKa of active site Tyr of the active site.

Belongs to the short-chain dehydrogenases/reductases (SDR) family. As to quaternary structure, interacts with the fatty acid elongation system components ELO3 and TSC13.

Its subcellular location is the endoplasmic reticulum membrane. The enzyme catalyses a very-long-chain (3R)-3-hydroxyacyl-CoA + NADP(+) = a very-long-chain 3-oxoacyl-CoA + NADPH + H(+). It carries out the reaction 3-oxooctadecanoyl-CoA + NADPH + H(+) = (3R)-hydroxyoctadecanoyl-CoA + NADP(+). The catalysed reaction is 3-oxoeicosanoyl-CoA + NADPH + H(+) = (3R)-hydroxyeicosanoyl-CoA + NADP(+). It catalyses the reaction 3-oxodocosanoyl-CoA + NADPH + H(+) = (3R)-hydroxydocosanoyl-CoA + NADP(+). The enzyme catalyses 3-oxotetracosanoyl-CoA + NADPH + H(+) = (3R)-hydroxytetracosanoyl-CoA + NADP(+). It carries out the reaction 3-oxohexacosanoyl-CoA + NADPH + H(+) = (3R)-hydroxyhexacosanoyl-CoA + NADP(+). It participates in lipid metabolism; fatty acid biosynthesis. Its function is as follows. Component of the microsomal membrane bound fatty acid elongation system, which produces the 26-carbon very long-chain fatty acids (VLCFA) from palmitate. Catalyzes the reduction of the 3-ketoacyl-CoA intermediate that is formed in each cycle of fatty acid elongation. VLCFAs serve as precursors for ceramide and sphingolipids. The chain is Very-long-chain 3-oxoacyl-CoA reductase (IFA38) from Saccharomyces cerevisiae (strain ATCC 204508 / S288c) (Baker's yeast).